The following is a 486-amino-acid chain: MQWEVVIGLETHTQLTTQTKIFSGSPTQFGAEPNTQTSPVDLALPGALPVMNRGAVERAIQFGLAIGATIAPHSVFARKNYFYPDLPKGYQISQMDLPIVQGGRVSFALEVDGKTEIRSVQLTRAHLEEDAGKSLHEDYQGMTGIDLNRAGTPLLEIVTEPDMRSAAEAVAYAKALHTLVTWLGICDGNMQEGSFRCDANVSVRPVGQKEYGTRCEIKNLNSFRFLEDAINYEVRRQIELIEDGGRVVQATRLYDPDKKETREMRSKEDAHDYRYFPDPDLPPLVVSAEWIARVQAAMPELPGAMRERFVRDYALSEYDAAVLTQSKGMANYFEAVVAAAGKEQAKPAANWLMGDVASTLNREDIEIAAAPVAAAQLALLLQRIADGTISNKIAKEVFGAMWEAKSDSAKLADELIESKGLKQISDSGALEKIVDDVLAANAKSVEEFRAGKEQAINALMGQAMKASKGKANPAQLTELLKKKLTA.

It belongs to the GatB/GatE family. GatB subfamily. As to quaternary structure, heterotrimer of A, B and C subunits.

The catalysed reaction is L-glutamyl-tRNA(Gln) + L-glutamine + ATP + H2O = L-glutaminyl-tRNA(Gln) + L-glutamate + ADP + phosphate + H(+). It carries out the reaction L-aspartyl-tRNA(Asn) + L-glutamine + ATP + H2O = L-asparaginyl-tRNA(Asn) + L-glutamate + ADP + phosphate + 2 H(+). Functionally, allows the formation of correctly charged Asn-tRNA(Asn) or Gln-tRNA(Gln) through the transamidation of misacylated Asp-tRNA(Asn) or Glu-tRNA(Gln) in organisms which lack either or both of asparaginyl-tRNA or glutaminyl-tRNA synthetases. The reaction takes place in the presence of glutamine and ATP through an activated phospho-Asp-tRNA(Asn) or phospho-Glu-tRNA(Gln). This chain is Aspartyl/glutamyl-tRNA(Asn/Gln) amidotransferase subunit B, found in Janthinobacterium sp. (strain Marseille) (Minibacterium massiliensis).